Consider the following 430-residue polypeptide: Adenylosuccinate synthetase (430 aa).

Residues 12–18 (GDEGKGK) and 40–42 (GHT) contribute to the GTP site. Catalysis depends on Asp-13, which acts as the Proton acceptor. Residues Asp-13 and Gly-40 each coordinate Mg(2+). Residues 13-16 (DEGK), 38-41 (NAGH), Thr-130, Arg-144, Gln-224, Thr-239, and Arg-303 contribute to the IMP site. The active-site Proton donor is the His-41. Residue 299-305 (TVTGRKR) participates in substrate binding. GTP is bound by residues Arg-305, 331–333 (KLD), and 413–415 (STS).

The protein belongs to the adenylosuccinate synthetase family. Homodimer. Mg(2+) serves as cofactor.

Its subcellular location is the cytoplasm. It carries out the reaction IMP + L-aspartate + GTP = N(6)-(1,2-dicarboxyethyl)-AMP + GDP + phosphate + 2 H(+). It functions in the pathway purine metabolism; AMP biosynthesis via de novo pathway; AMP from IMP: step 1/2. Plays an important role in the de novo pathway of purine nucleotide biosynthesis. Catalyzes the first committed step in the biosynthesis of AMP from IMP. This chain is Adenylosuccinate synthetase, found in Cereibacter sphaeroides (strain ATCC 17025 / ATH 2.4.3) (Rhodobacter sphaeroides).